We begin with the raw amino-acid sequence, 429 residues long: Histidinol dehydrogenase (429 aa).

NAD(+)-binding residues include Y127, Q188, and N211. Substrate contacts are provided by S234, Q256, and H259. Zn(2+) contacts are provided by Q256 and H259. Catalysis depends on proton acceptor residues E324 and H325. Residues H325, D358, E412, and H417 each contribute to the substrate site. A Zn(2+)-binding site is contributed by D358. H417 contacts Zn(2+).

Belongs to the histidinol dehydrogenase family. It depends on Zn(2+) as a cofactor.

The catalysed reaction is L-histidinol + 2 NAD(+) + H2O = L-histidine + 2 NADH + 3 H(+). The protein operates within amino-acid biosynthesis; L-histidine biosynthesis; L-histidine from 5-phospho-alpha-D-ribose 1-diphosphate: step 9/9. Its function is as follows. Catalyzes the sequential NAD-dependent oxidations of L-histidinol to L-histidinaldehyde and then to L-histidine. This Bacillus anthracis protein is Histidinol dehydrogenase.